We begin with the raw amino-acid sequence, 339 residues long: N-acetyl-gamma-glutamyl-phosphate reductase (339 aa).

C145 is a catalytic residue.

This sequence belongs to the NAGSA dehydrogenase family. Type 1 subfamily.

It localises to the cytoplasm. It catalyses the reaction N-acetyl-L-glutamate 5-semialdehyde + phosphate + NADP(+) = N-acetyl-L-glutamyl 5-phosphate + NADPH + H(+). The protein operates within amino-acid biosynthesis; L-arginine biosynthesis; N(2)-acetyl-L-ornithine from L-glutamate: step 3/4. Its function is as follows. Catalyzes the NADPH-dependent reduction of N-acetyl-5-glutamyl phosphate to yield N-acetyl-L-glutamate 5-semialdehyde. This chain is N-acetyl-gamma-glutamyl-phosphate reductase, found in Thermotoga maritima (strain ATCC 43589 / DSM 3109 / JCM 10099 / NBRC 100826 / MSB8).